The sequence spans 182 residues: Large ribosomal subunit protein uL6 (182 aa).

Belongs to the universal ribosomal protein uL6 family. Part of the 50S ribosomal subunit.

Functionally, this protein binds to the 23S rRNA, and is important in its secondary structure. It is located near the subunit interface in the base of the L7/L12 stalk, and near the tRNA binding site of the peptidyltransferase center. This chain is Large ribosomal subunit protein uL6, found in Methanococcus vannielii.